The following is a 304-amino-acid chain: Glycine--tRNA ligase alpha subunit (304 aa).

It belongs to the class-II aminoacyl-tRNA synthetase family. As to quaternary structure, tetramer of two alpha and two beta subunits.

It localises to the cytoplasm. The catalysed reaction is tRNA(Gly) + glycine + ATP = glycyl-tRNA(Gly) + AMP + diphosphate. This is Glycine--tRNA ligase alpha subunit from Serratia proteamaculans (strain 568).